The primary structure comprises 279 residues: MAIRKLRPVTPASRYLSYPEFDEITKSEPEKSLLAPLKKSGGRNKAGRITSRHRGGGHKRFYRIIDFKRNKDNIPATVAAIEYDPNRSARIALLHYVDGEKRYILAPKGLKVGEQLLSGDKVEVKPGNTMPLKNIPLGTDIHNIEMKAGKGGQIVRSAGAYAVLAAKEGDYATLKLPSGEIRKVRIECRATIGGVGNADHENIVLGKAGRSRWLGVRPQTRGMAMNPVDHPMGGGEGKSKSGGGRKHPKSPWGQLAKGLKTRNKKKASSKLIVRGRKSK.

The segment at 223–279 is disordered; sequence MAMNPVDHPMGGGEGKSKSGGGRKHPKSPWGQLAKGLKTRNKKKASSKLIVRGRKSK. A compositionally biased stretch (gly residues) spans 232–242; it reads MGGGEGKSKSG. Residues 259–279 are compositionally biased toward basic residues; that stretch reads LKTRNKKKASSKLIVRGRKSK.

The protein belongs to the universal ribosomal protein uL2 family. In terms of assembly, part of the 50S ribosomal subunit. Forms a bridge to the 30S subunit in the 70S ribosome.

One of the primary rRNA binding proteins. Required for association of the 30S and 50S subunits to form the 70S ribosome, for tRNA binding and peptide bond formation. It has been suggested to have peptidyltransferase activity; this is somewhat controversial. Makes several contacts with the 16S rRNA in the 70S ribosome. The polypeptide is Large ribosomal subunit protein uL2 (Prosthecochloris aestuarii (strain DSM 271 / SK 413)).